Consider the following 320-residue polypeptide: Ferrochelatase (320 aa).

Fe cation-binding residues include His-194 and Glu-275.

The protein belongs to the ferrochelatase family. In terms of assembly, monomer.

The protein localises to the cytoplasm. It catalyses the reaction heme b + 2 H(+) = protoporphyrin IX + Fe(2+). It participates in porphyrin-containing compound metabolism; protoheme biosynthesis; protoheme from protoporphyrin-IX: step 1/1. Its function is as follows. Catalyzes the ferrous insertion into protoporphyrin IX. The sequence is that of Ferrochelatase from Shigella flexneri serotype 5b (strain 8401).